Consider the following 553-residue polypeptide: Cytochrome P450 86A22 (553 aa).

Residues 8–24 (MIVAIVAAYLLWFKSIT) form a helical membrane-spanning segment. A heme-binding site is contributed by cysteine 459.

The protein belongs to the cytochrome P450 family. Requires heme as cofactor. In terms of tissue distribution, mostly expressed in the developing stigma of floral buds. Weakly detected in leaves, stems and flowers.

It is found in the membrane. The enzyme catalyses (9Z)-octadecenoyl-CoA + reduced [NADPH--hemoprotein reductase] + O2 = (9Z)-18-hydroxyoctadecenoyl-CoA + oxidized [NADPH--hemoprotein reductase] + H2O + H(+). The catalysed reaction is (9Z,12Z)-octadecadienoyl-CoA + reduced [NADPH--hemoprotein reductase] + O2 = (9Z,12Z)-18-hydroxyoctadecadienoyl-CoA + oxidized [NADPH--hemoprotein reductase] + H2O + H(+). In terms of biological role, fatty acyl-CoA omega-hydroxylase essential for the production of omega-hydroxy fatty acids and the biosynthesis of triacylglycerol-/diacylglycerol-based estolide polyesters in the stigma. Substrate preference is 16:0-CoA &gt; 18:1-CoA &gt; 18:0-CoA. This chain is Cytochrome P450 86A22, found in Petunia hybrida (Petunia).